Here is a 181-residue protein sequence, read N- to C-terminus: High mobility group protein B4 (181 aa).

The HMG box 1 DNA-binding region spans 9–79; that stretch reads PKVNVSSYIH…RYQQEMMNYI (71 aa). The segment covering 80–89 has biased composition (basic residues); that stretch reads GKRRKRRKRD. The tract at residues 80–100 is disordered; that stretch reads GKRRKRRKRDPKAPRKPPSSF. The segment at residues 93–161 is a DNA-binding region (HMG box 2); it reads PRKPPSSFLL…KYFEEQEAYR (69 aa).

The protein belongs to the HMGB family. As to expression, expressed in adult germ cells (at protein level).

It localises to the nucleus. The protein localises to the chromosome. The protein is High mobility group protein B4 (Hmgb4) of Mus musculus (Mouse).